A 274-amino-acid chain; its full sequence is Trypsin-1 (274 aa).

Positions 1 to 18 (MSNKIAILLAVLVAVVAC) are cleaved as a signal peptide. A propeptide spans 19-47 (AEAQANQRHRLVRPSPSFSPRPRYAVGQR) (activation peptide). A Peptidase S1 domain is found at 48–273 (IVGGFEIDVS…VRDWVRENSG (226 aa)). A disulfide bond links Cys-73 and Cys-89. Catalysis depends on charge relay system residues His-88 and Asp-133. 2 disulfides stabilise this stretch: Cys-198-Cys-214 and Cys-225-Cys-249. The active-site Charge relay system is the Ser-229.

The protein belongs to the peptidase S1 family. In terms of tissue distribution, constitutively expressed at low level in the gut of adult females. Also expressed in the gut of male and female pupae.

It is found in the secreted. The enzyme catalyses Preferential cleavage: Arg-|-Xaa, Lys-|-Xaa.. Its function is as follows. Major function may be to aid in digestion of the blood meal. This chain is Trypsin-1 (TRYP1), found in Anopheles gambiae (African malaria mosquito).